The sequence spans 220 residues: MRLILLGAPGAGKGTQANFIKEKFGIPQISTGDMLRAAVKAGSPLGVEAKGYMDAGKLVPDALIIGLVKERLKDADCANGYLFDGFPRTIAQADAMKDAGVAIDYVLEIDVPFSEIVERMSGRRTHPASGRTYHVKFNPPKVEGKDDVTGEPLIQRDDDKEETVKKRLEVYEAQTKPLITYYGDWAKRGEENGLKAPQYRKISGLGTVDEIRERAFDALK.

10-15 provides a ligand contact to ATP; the sequence is GAGKGT. Residues 30 to 59 are NMP; it reads STGDMLRAAVKAGSPLGVEAKGYMDAGKLV. AMP is bound by residues Thr31, Arg36, 57–59, 85–88, and Gln92; these read KLV and GFPR. A disordered region spans residues 122–150; it reads GRRTHPASGRTYHVKFNPPKVEGKDDVTG. Residues 122–159 form an LID region; that stretch reads GRRTHPASGRTYHVKFNPPKVEGKDDVTGEPLIQRDDD. Residues Arg123 and 132-133 contribute to the ATP site; that span reads TY. AMP is bound by residues Arg156 and Arg167. Gly206 contributes to the ATP binding site.

Belongs to the adenylate kinase family. In terms of assembly, monomer.

It is found in the cytoplasm. It catalyses the reaction AMP + ATP = 2 ADP. The protein operates within purine metabolism; AMP biosynthesis via salvage pathway; AMP from ADP: step 1/1. Its function is as follows. Catalyzes the reversible transfer of the terminal phosphate group between ATP and AMP. Plays an important role in cellular energy homeostasis and in adenine nucleotide metabolism. The protein is Adenylate kinase of Burkholderia ambifaria (strain MC40-6).